A 616-amino-acid chain; its full sequence is Glucoamylase P (616 aa).

The N-terminal stretch at 1–29 is a signal peptide; that stretch reads MRLLPSSCAGALSLLCSLAIAAPTELKAR. Residue W149 participates in substrate binding. N-linked (GlcNAc...) asparagine glycosylation is present at N200. The Proton acceptor role is filled by D205. E208 (proton donor) is an active-site residue. The N-linked (GlcNAc...) asparagine glycan is linked to N427. The region spanning 501–608 is the CBM20 domain; sequence VTSSCQVSIT…AVTTDDAWMG (108 aa).

The protein belongs to the glycosyl hydrolase 15 family.

It is found in the secreted. The catalysed reaction is Hydrolysis of terminal (1-&gt;4)-linked alpha-D-glucose residues successively from non-reducing ends of the chains with release of beta-D-glucose.. The polypeptide is Glucoamylase P (GAMP) (Amorphotheca resinae (Creosote fungus)).